Reading from the N-terminus, the 225-residue chain is Ras-related protein Rab-21 (225 aa).

Ala-2 carries the N-acetylalanine modification. 10 residues coordinate GTP: Gly-28, Gly-31, Lys-32, Thr-33, Ser-34, Asn-45, Asp-46, His-48, Thr-50, and Thr-51. Residue Thr-33 coordinates Mg(2+). A Switch 1 motif is present at residues 43–56 (KFNDKHITTLQASF). The Mg(2+) site is built by Thr-51 and Asp-74. A Switch 2 motif is present at residues 76–94 (AGQERFHALGPIYYRDSNG). Positions 77, 132, 133, 135, 163, and 164 each coordinate GTP. A disordered region spans residues 188 to 225 (ERAKGNGSSQPGTARRGVQIIDDEPQAQTSGGGCCSSG). Residues Cys-221 and Cys-222 are each lipidated (S-geranylgeranyl cysteine). A Cysteine methyl ester modification is found at Cys-222. Positions 223 to 225 (SSG) are cleaved as a propeptide — removed in mature form.

Belongs to the small GTPase superfamily. Rab family. Interacts with the cytoplasmic tail of integrins ITGA1, ITGA2, ITGA5, ITGA6, ITGA11 and ITGB1. Interacts with RABGEF1 (via VPS9 domain). Interacts with ANKRD27. Interacts with VAMP7. Interacts (in GTP-bound form) with VAMP8 in response to starvation; the interaction probably regulates VAMP8 endolysosomal trafficking. Interacts (active GTP-bound form) with TMED10; the interaction is indirect and regulates TMED10 abundance and localization at the Golgi. Requires Mg(2+) as cofactor. As to expression, widely expressed. In jejunal tissue, predominantly expressed in the apical region of the epithelial cell layer of the villi, weak expression, if any, in the crypt epithelium. Capillary endothelium and some cell types in the lamina propria also show expression.

Its subcellular location is the endoplasmic reticulum membrane. The protein localises to the golgi apparatus. The protein resides in the trans-Golgi network. It is found in the golgi apparatus membrane. It localises to the early endosome membrane. Its subcellular location is the cytoplasmic vesicle membrane. The protein localises to the cleavage furrow. The protein resides in the cell projection. It is found in the neuron projection. It carries out the reaction GTP + H2O = GDP + phosphate + H(+). With respect to regulation, regulated by guanine nucleotide exchange factors (GEFs) including ANKRD27 and RABGEF1, which promote the exchange of bound GDP for free GTP. Regulated by GTPase activating proteins (GAPs) which increase the GTP hydrolysis activity. Inhibited by GDP dissociation inhibitors (GDIs). Its function is as follows. The small GTPases Rab are key regulators of intracellular membrane trafficking, from the formation of transport vesicles to their fusion with membranes. Rabs cycle between an inactive GDP-bound form and an active GTP-bound form that is able to recruit to membranes different sets of downstream effectors directly responsible for vesicle formation, movement, tethering and fusion. RAB21 is involved in membrane trafficking control. During the mitosis of adherent cells, controls the endosomal trafficking of integrins which is required for the successful completion of cytokinesis. Regulates integrin internalization and recycling, but does not influence the traffic of endosomally translocated receptors in general. As a result, may regulate cell adhesion and migration. Involved in neurite growth. Following SBF2/MTMT13-mediated activation in response to starvation-induced autophagy, binds to and regulates SNARE protein VAMP8 endolysosomal transport required for SNARE-mediated autophagosome-lysosome fusion. Modulates protein levels of the cargo receptors TMED2 and TMED10, and required for appropriate Golgi localization of TMED10. The protein is Ras-related protein Rab-21 of Homo sapiens (Human).